An 86-amino-acid chain; its full sequence is Defensin-like protein 259 (86 aa).

The signal sequence occupies residues 1 to 25 (MKNASLKLPLLIFILVITSNLGAEA). 3 disulfides stabilise this stretch: C60-C76, C66-C83, and C70-C85.

Belongs to the DEFL family.

It is found in the secreted. The chain is Defensin-like protein 259 from Arabidopsis thaliana (Mouse-ear cress).